A 100-amino-acid polypeptide reads, in one-letter code: NADH-quinone oxidoreductase subunit K (100 aa).

Transmembrane regions (helical) follow at residues 4–24 (TSYY…GVLL), 29–49 (IVIF…LVAF), and 61–81 (IVFF…ALLV).

Belongs to the complex I subunit 4L family. NDH-1 is composed of 14 different subunits. Subunits NuoA, H, J, K, L, M, N constitute the membrane sector of the complex.

Its subcellular location is the cell membrane. The enzyme catalyses a quinone + NADH + 5 H(+)(in) = a quinol + NAD(+) + 4 H(+)(out). Its function is as follows. NDH-1 shuttles electrons from NADH, via FMN and iron-sulfur (Fe-S) centers, to quinones in the respiratory chain. The immediate electron acceptor for the enzyme in this species is believed to be ubiquinone. Couples the redox reaction to proton translocation (for every two electrons transferred, four hydrogen ions are translocated across the cytoplasmic membrane), and thus conserves the redox energy in a proton gradient. The chain is NADH-quinone oxidoreductase subunit K from Chloroflexus aggregans (strain MD-66 / DSM 9485).